A 544-amino-acid polypeptide reads, in one-letter code: ATP-dependent RNA helicase DBP9 (544 aa).

Positions 9-37 (KSFDSFGLDDRLLSGLAACDMKQPTLIQN) match the Q motif motif. Positions 41–214 (PLALDKGVDI…QQFCRSTVAS (174 aa)) constitute a Helicase ATP-binding domain. 54–61 (AVTGSGKT) contacts ATP. Positions 162-165 (DEAD) match the DEAD box motif. One can recognise a Helicase C-terminal domain in the interval 225–430 (KLLQYYVKCS…PYSFDMKQVE (206 aa)). The tract at residues 525 to 544 (HKKYTKKKKGGDPLKFKKRK) is disordered. The span at 534-544 (GGDPLKFKKRK) shows a compositional bias: basic and acidic residues.

It belongs to the DEAD box helicase family. DDX56/DBP9 subfamily.

It localises to the nucleus. It is found in the nucleolus. The enzyme catalyses ATP + H2O = ADP + phosphate + H(+). In terms of biological role, ATP-binding RNA helicase involved in the biogenesis of 60S ribosomal subunits and is required for the normal formation of 25S and 5.8S rRNAs. This Yarrowia lipolytica (strain CLIB 122 / E 150) (Yeast) protein is ATP-dependent RNA helicase DBP9 (DBP9).